Consider the following 423-residue polypeptide: Calcium up-regulated protein A (423 aa).

The segment covering Met1–Leu19 has biased composition (basic and acidic residues). The disordered stretch occupies residues Met1 to Lys27. Ricin B-type lectin domains are found at residues Lys27–Phe147 and Gln118–Asn251.

It belongs to the cup family.

It localises to the cytoplasm. Its subcellular location is the membrane. In terms of biological role, may play an important role in stabilizing and/or regulating the cell membrane during Ca(2+) stress or certain stages of development. The sequence is that of Calcium up-regulated protein A (cupA) from Dictyostelium discoideum (Social amoeba).